Here is a 433-residue protein sequence, read N- to C-terminus: Urokinase-type plasminogen activator (433 aa).

The first 20 residues, 1 to 20, serve as a signal peptide directing secretion; the sequence is MRVLLACLLVCALVVSDSDG. Residues 29-65 form the EGF-like domain; it reads GESNCGCLNGGKCVTYKYFSNIQRCSCPKKFQGEHCE. 6 disulfide bridges follow: C33-C41, C35-C53, C55-C64, C72-C153, C93-C135, and C124-C148. The interval 36–59 is binds urokinase plasminogen activator surface receptor; sequence LNGGKCVTYKYFSNIQRCSCPKKF. The 82-residue stretch at 72 to 153 folds into the Kringle domain; sequence CYQGNGHSYR…FVQFCMVQDC (82 aa). The segment at 154-180 is connecting peptide; that stretch reads SVGKSPSSPREKEEFQCGQKALRPRFK. Position 160 is a phosphoserine (S160). 6 disulfides stabilise this stretch: C170/C301, C211/C227, C219/C290, C315/C384, C347/C363, and C374/C402. Residues 181 to 426 form the Peptidase S1 domain; it reads IVGGQVTNAE…FLPWINTHTR (246 aa). Catalysis depends on charge relay system residues H226 and D277. The Charge relay system role is filled by S378.

Belongs to the peptidase S1 family. Found in high and low molecular mass forms. Each consists of two chains, A and B. The high molecular mass form contains a long chain A which is cleaved to yield a short chain A. Forms heterodimer with SERPINA5. Binds LRP1B; binding is followed by internalization and degradation. Interacts with MRC2. Interacts with PLAUR. In complex with SERPINE1, interacts with PLAUR/uPAR. Interacts with SORL1 and LRP1, either alone or in complex with SERPINE1; these interactions are abolished in the presence of LRPAP1/RAP. The ternary complex composed of PLAUR-PLAU-PAI1 also interacts with SORLA. Produced as an inactive single-chain protein (pro-uPA or sc-uPA), is processed into the active disulfide-linked two-chain form of PLAU/uPA by a proteolytic event mediated, at least, by TMPRSS4.

The protein resides in the secreted. The catalysed reaction is Specific cleavage of Arg-|-Val bond in plasminogen to form plasmin.. Its activity is regulated as follows. Inhibited by SERPINA5. Inhibited by SERPINE1. Functionally, specifically cleaves the zymogen plasminogen to form the active enzyme plasmin. The sequence is that of Urokinase-type plasminogen activator (PLAU) from Bos taurus (Bovine).